The chain runs to 369 residues: Leucine carboxyl methyltransferase 1 (369 aa).

S-adenosyl-L-methionine contacts are provided by residues arginine 84, glycine 108, aspartate 132, 187–188 (DL), and glutamate 215.

Belongs to the methyltransferase superfamily. LCMT family.

The catalysed reaction is [phosphatase 2A protein]-C-terminal L-leucine + S-adenosyl-L-methionine = [phosphatase 2A protein]-C-terminal L-leucine methyl ester + S-adenosyl-L-homocysteine. In terms of biological role, methylates the carboxyl group of the C-terminal leucine residue of protein phosphatase 2A catalytic subunits to form alpha-leucine ester residues. This Debaryomyces hansenii (strain ATCC 36239 / CBS 767 / BCRC 21394 / JCM 1990 / NBRC 0083 / IGC 2968) (Yeast) protein is Leucine carboxyl methyltransferase 1 (PPM1).